Consider the following 491-residue polypeptide: MANYFNTLNLRQQLAQLGKCRFMARDEFADGASYLQGKKVVIVGCGAQGLNQGLNMRDSGLDISYALRKEAIAEKRASWRKATENGFKVGTYEELIPQADLVVNLTPDKQHSDVVRSVQPLMKDGAALGYSHGFNIVEVGEQIRKDITVVMVAPKCPGTEVREEYKRGFGVPTLIAVHPENDPKGEGMAIAKAWAAATGGHRAGVLESSFVAEVKSDLMGEQTILCGMLQAGSLLCFDKLVAEGTDPAYAEKLIQFGWETITEALKQGGITLMMDRLSNPAKLRAYALSEQLKEIMAPLFQKHMDDIISGEFSSGMMADWANDDKKLLTWREETGKTAFETAPQYEGKIGEQEYFDKGVLMIAMVKAGVELAFETMVASGIIEESAYYESLHELPLIANTIARKRLYEMNVVISDTAEYGNYLFSYACVPLLKEFMTTLQTGDLGTAIAEGAVDNAQLRDVNEAIRSHAIEQVGKKLRGYMTDMKRIAVAG.

The region spanning 15–208 (AQLGKCRFMA…GGHRAGVLES (194 aa)) is the KARI N-terminal Rossmann domain. Residues 45–48 (CGAQ), Arg68, Arg76, Ser78, and 108–110 (DKQ) contribute to the NADP(+) site. The active site involves His132. Gly158 contributes to the NADP(+) binding site. KARI C-terminal knotted domains follow at residues 209-344 (SFVA…TAPQ) and 345-484 (YEGK…MTDM). Residues Asp217, Glu221, Glu389, and Glu393 each coordinate Mg(2+). Residue Ser414 coordinates substrate.

This sequence belongs to the ketol-acid reductoisomerase family. The cofactor is Mg(2+).

The catalysed reaction is (2R)-2,3-dihydroxy-3-methylbutanoate + NADP(+) = (2S)-2-acetolactate + NADPH + H(+). It catalyses the reaction (2R,3R)-2,3-dihydroxy-3-methylpentanoate + NADP(+) = (S)-2-ethyl-2-hydroxy-3-oxobutanoate + NADPH + H(+). It participates in amino-acid biosynthesis; L-isoleucine biosynthesis; L-isoleucine from 2-oxobutanoate: step 2/4. The protein operates within amino-acid biosynthesis; L-valine biosynthesis; L-valine from pyruvate: step 2/4. In terms of biological role, involved in the biosynthesis of branched-chain amino acids (BCAA). Catalyzes an alkyl-migration followed by a ketol-acid reduction of (S)-2-acetolactate (S2AL) to yield (R)-2,3-dihydroxy-isovalerate. In the isomerase reaction, S2AL is rearranged via a Mg-dependent methyl migration to produce 3-hydroxy-3-methyl-2-ketobutyrate (HMKB). In the reductase reaction, this 2-ketoacid undergoes a metal-dependent reduction by NADPH to yield (R)-2,3-dihydroxy-isovalerate. This Klebsiella pneumoniae subsp. pneumoniae (strain ATCC 700721 / MGH 78578) protein is Ketol-acid reductoisomerase (NADP(+)).